Here is a 718-residue protein sequence, read N- to C-terminus: Peroxisomal bifunctional enzyme (718 aa).

Residues 1–280 form an enoyl-CoA hydratase / isomerase region; it reads MAEYLRLPHS…FAEKSANKWS (280 aa). Lys38 bears the N6-succinyllysine mark. Gly99 lines the substrate pocket. N6-acetyllysine; alternate occurs at positions 163 and 172. Lys163 and Lys172 each carry N6-succinyllysine; alternate. The residue at position 181 (Lys181) is an N6-succinyllysine. Residues Lys189 and Lys217 each carry the N6-acetyllysine; alternate modification. Lys189 and Lys217 each carry N6-succinyllysine; alternate. At Lys240 the chain carries N6-succinyllysine. Lys248 bears the N6-acetyllysine mark. Lys252 is modified (N6-succinyllysine). Lys274 is subject to N6-acetyllysine; alternate. N6-succinyllysine; alternate is present on Lys274. 3 positions are modified to N6-succinyllysine: Lys278, Lys288, and Lys329. The 3-hydroxyacyl-CoA dehydrogenase stretch occupies residues 281-567; the sequence is TPSGASWKTA…DMLCEAGRFG (287 aa). 4 positions are modified to N6-acetyllysine: Lys344, Lys348, Lys355, and Lys459. The residue at position 527 (Lys527) is an N6-succinyllysine. Thr543 is subject to Phosphothreonine. At Lys572 the chain carries N6-succinyllysine. N6-acetyllysine; alternate is present on residues Lys579, Lys586, and Lys705. 3 positions are modified to N6-succinyllysine; alternate: Lys579, Lys586, and Lys705. The Microbody targeting signal signature appears at 716 to 718; sequence SKL. Lys717 carries the N6-succinyllysine modification.

It in the N-terminal section; belongs to the enoyl-CoA hydratase/isomerase family. The protein in the C-terminal section; belongs to the 3-hydroxyacyl-CoA dehydrogenase family. As to quaternary structure, monomer. In terms of processing, acetylated, leading to enhanced enzyme activity. Acetylation is enhanced by up to 80% after treatment either with trichostin A (TCA) or with nicotinamide (NAM) with highest increase on Lys-344. Acetylation and enzyme activity increased by about 1.5% on addition of fatty acids.

The protein resides in the peroxisome. The catalysed reaction is a (3S)-3-hydroxyacyl-CoA = a (2E)-enoyl-CoA + H2O. The enzyme catalyses a 4-saturated-(3S)-3-hydroxyacyl-CoA = a (3E)-enoyl-CoA + H2O. It carries out the reaction a (3Z)-enoyl-CoA = a 4-saturated (2E)-enoyl-CoA. It catalyses the reaction a (3E)-enoyl-CoA = a 4-saturated (2E)-enoyl-CoA. The catalysed reaction is a (3S)-3-hydroxyacyl-CoA + NAD(+) = a 3-oxoacyl-CoA + NADH + H(+). The enzyme catalyses (2S,3S)-3-hydroxy-2-methylbutanoyl-CoA = (2E)-2-methylbut-2-enoyl-CoA + H2O. It carries out the reaction (2E)-dodecenedioyl-CoA + H2O = (3S)-hydroxydodecanedioyl-CoA. It catalyses the reaction (3S)-hydroxydodecanedioyl-CoA + NAD(+) = 3-oxododecanedioyl-CoA + NADH + H(+). The catalysed reaction is (2E)-octenedioyl-CoA + H2O = (3S)-hydroxyoctanedioyl-CoA. The enzyme catalyses (3S)-hydroxyoctanedioyl-CoA + NAD(+) = 3-oxooctanedioyl-CoA + NADH + H(+). It carries out the reaction (2E)-decenedioyl-CoA + H2O = (3S)-hydroxydecanedioyl-CoA. It catalyses the reaction (3S)-hydroxydecanedioyl-CoA + NAD(+) = 3-oxodecanedioyl-CoA + NADH + H(+). The catalysed reaction is (2E)-tetradecenedioyl-CoA + H2O = (3S)-hydroxytetradecanedioyl-CoA. The enzyme catalyses (3S)-hydroxytetradecanedioyl-CoA + NAD(+) = 3-oxotetradecanedioyl-CoA + NADH + H(+). It carries out the reaction (3E,5Z)-tetradecadienoyl-CoA = (2E,5Z)-tetradecadienoyl-CoA. It catalyses the reaction (3E,5Z)-octadienoyl-CoA = (2E,5Z)-octadienoyl-CoA. The catalysed reaction is (3S)-hydroxydecanoyl-CoA + NAD(+) = 3-oxodecanoyl-CoA + NADH + H(+). The enzyme catalyses (3E)-decenoyl-CoA = (2E)-decenoyl-CoA. It carries out the reaction (3Z)-hexenoyl-CoA = (2E)-hexenoyl-CoA. It catalyses the reaction (3E)-hexenoyl-CoA = (2E)-hexenoyl-CoA. The catalysed reaction is (3S)-hydroxydecanoyl-CoA = (2E)-decenoyl-CoA + H2O. The enzyme catalyses (3S)-hydroxyhexanoyl-CoA = (2E)-hexenoyl-CoA + H2O. It carries out the reaction (3S)-hydroxyhexadecanoyl-CoA + NAD(+) = 3-oxohexadecanoyl-CoA + NADH + H(+). It catalyses the reaction (3S)-hydroxyhexadecanoyl-CoA = (2E)-hexadecenoyl-CoA + H2O. The catalysed reaction is (2E)-hexadecenedioyl-CoA + H2O = (3S)-hydroxyhexadecanedioyl-CoA. The enzyme catalyses (3S)-hydroxyhexadecanedioyl-CoA + NAD(+) = 3-oxohexadecanedioyl-CoA + NADH + H(+). It functions in the pathway lipid metabolism; fatty acid beta-oxidation. Its activity is regulated as follows. Enzyme activity enhanced by acetylation. In terms of biological role, peroxisomal trifunctional enzyme possessing 2-enoyl-CoA hydratase, 3-hydroxyacyl-CoA dehydrogenase, and delta 3, delta 2-enoyl-CoA isomerase activities. Catalyzes two of the four reactions of the long chain fatty acids peroxisomal beta-oxidation pathway. Can also use branched-chain fatty acids such as 2-methyl-2E-butenoyl-CoA as a substrate, which is hydrated into (2S,3S)-3-hydroxy-2-methylbutanoyl-CoA. Optimal isomerase for 2,5 double bonds into 3,5 form isomerization in a range of enoyl-CoA species. Also able to isomerize both 3-cis and 3-trans double bonds into the 2-trans form in a range of enoyl-CoA species. With HSD17B4, catalyzes the hydration of trans-2-enoyl-CoA and the dehydrogenation of 3-hydroxyacyl-CoA, but with opposite chiral specificity. Regulates the amount of medium-chain dicarboxylic fatty acids which are essential regulators of all fatty acid oxidation pathways. Also involved in the degradation of long-chain dicarboxylic acids through peroxisomal beta-oxidation. The sequence is that of Peroxisomal bifunctional enzyme from Mus musculus (Mouse).